We begin with the raw amino-acid sequence, 168 residues long: Photosystem I assembly protein Ycf3 (168 aa).

TPR repeat units lie at residues 35–68, 72–105, and 120–153; these read AFTYYRDGMSAQSEGNYAEALQNYYEAMRLEIDP, SYILYNIGLIHTSNGEHTKALEYYFRALERNPFL, and GEQAIRQGDSEVAESWFNQAAEYWKQAIALTPGN.

This sequence belongs to the Ycf3 family.

The protein localises to the plastid. The protein resides in the chloroplast thylakoid membrane. Essential for the assembly of the photosystem I (PSI) complex. May act as a chaperone-like factor to guide the assembly of the PSI subunits. This chain is Photosystem I assembly protein Ycf3, found in Phaseolus vulgaris (Kidney bean).